The primary structure comprises 463 residues: Cytochrome c-552 (463 aa).

Residues 1–23 (MNVKSIALSAVIATSFLAAGAMA) form the signal peptide. Heme c is bound at residue His83. Positions 111, 114, and 115 each coordinate heme. Residues Cys149, Cys152, His153, Cys191, Cys194, and His195 each contribute to the heme c site. Positions 197, 198, 246, and 248 each coordinate Ca(2+). Tyr198 lines the substrate pocket. His249 is a substrate binding site. Positions 260, 267, 270, 271, 286, 299, 302, 303, and 378 each coordinate heme c.

It belongs to the cytochrome c-552 family. Requires Ca(2+) as cofactor. Heme c is required as a cofactor.

The protein localises to the periplasm. The enzyme catalyses 6 Fe(III)-[cytochrome c] + NH4(+) + 2 H2O = 6 Fe(II)-[cytochrome c] + nitrite + 8 H(+). It functions in the pathway nitrogen metabolism; nitrate reduction (assimilation). Functionally, catalyzes the reduction of nitrite to ammonia, consuming six electrons in the process. This chain is Cytochrome c-552, found in Shewanella frigidimarina (strain NCIMB 400).